We begin with the raw amino-acid sequence, 567 residues long: Hydrogenase-2 large chain (567 aa).

Residues Cys-61, Cys-64, Cys-546, and Cys-549 each contribute to the Ni(2+) site. Positions 553–567 (VVDADGNEVVSVKVL) are excised as a propeptide.

It belongs to the [NiFe]/[NiFeSe] hydrogenase large subunit family. In terms of assembly, heterodimer of a large and a small subunit. Ni(2+) serves as cofactor.

The protein localises to the cell membrane. It carries out the reaction H2 + A = AH2. Its function is as follows. This is one of three E.coli hydrogenases synthesized in response to different physiological conditions. HYD2 is involved in hydrogen uptake. The polypeptide is Hydrogenase-2 large chain (hybC) (Escherichia coli O157:H7).